The following is a 488-amino-acid chain: Tocopherol cyclase, chloroplastic (488 aa).

The N-terminal 76 residues, 1-76, are a transit peptide targeting the chloroplast; sequence MEIRSLIVSM…VPTSPNRELR (76 aa).

The protein resides in the plastid. The protein localises to the chloroplast. Its subcellular location is the plastoglobule. It carries out the reaction delta-tocopherol = 2-methyl-6-phytyl-1,4-benzene-1,4-diol. The enzyme catalyses gamma-tocopherol = 2,3-dimethyl-6-phytylbenzene-1,4-diol. It catalyses the reaction delta-tocotrienol = 6-geranylgeranyl-2-methylbenzene-1,4-diol. The catalysed reaction is gamma-tocotrienol = 6-geranylgeranyl-2,3-dimethylbenzene-1,4-diol. It functions in the pathway cofactor biosynthesis; tocopherol biosynthesis. In terms of biological role, involved in the synthesis of both tocopherols and tocotrienols (vitamin E), which presumably protect photosynthetic complexes from oxidative stress. Catalyzes the conversion of 2-methyl-6-phytyl-1,4-hydroquinone and 2,3-dimethyl-5-phytyl-1,4-hydroquinone (DMPQ) to delta- and gamma-tocopherol respectively. Also converts 2,3-dimethyl-5-geranylgeranyl-1,4-hydroquinone (DMGQ) to gamma-tocotrienol. The sequence is that of Tocopherol cyclase, chloroplastic (VTE1) from Arabidopsis thaliana (Mouse-ear cress).